Consider the following 421-residue polypeptide: Elongation factor 1-alpha (421 aa).

The region spanning 4 to 220 is the tr-type G domain; the sequence is NRHQNLAVIG…NGLPVPQPPT (217 aa). The interval 13-20 is G1; the sequence is GHVDHGKS. 13 to 20 lines the GTP pocket; sequence GHVDHGKS. S20 contacts Mg(2+). A G2 region spans residues 69 to 73; it reads GVTID. The segment at 90–93 is G3; it reads DCPG. GTP is bound by residues 90 to 94 and 145 to 148; these read DCPGH and NKMD. The segment at 145 to 148 is G4; the sequence is NKMD. A G5 region spans residues 184–186; sequence SAF.

The protein belongs to the TRAFAC class translation factor GTPase superfamily. Classic translation factor GTPase family. EF-Tu/EF-1A subfamily.

The protein localises to the cytoplasm. It carries out the reaction GTP + H2O = GDP + phosphate + H(+). In terms of biological role, GTP hydrolase that promotes the GTP-dependent binding of aminoacyl-tRNA to the A-site of ribosomes during protein biosynthesis. This Halobacterium salinarum (strain ATCC 700922 / JCM 11081 / NRC-1) (Halobacterium halobium) protein is Elongation factor 1-alpha.